The sequence spans 128 residues: Con-Ins F2c (128 aa).

Residues 1 to 24 (MTTSSYFLLVALGLLLYVCRSSFG) form the signal peptide. 4 cysteine pairs are disulfide-bonded: C29-C104, C41-C107, C53-C120, and C106-C111. A propeptide spans 59 to 89 (LQGGTGKKRGRASLLRKRRAFLSMLKARAKR) (c peptide). E115 is modified (4-carboxyglutamate; partial). The residue at position 127 (S127) is a Serine amide.

This sequence belongs to the insulin family. In terms of assembly, heterodimer of A and B chains; disulfide-linked. In terms of tissue distribution, expressed by the venom gland.

It is found in the secreted. This venom insulin facilitates prey capture by rapidly inducing hypoglycemic shock. Intraperitoneal injection of this peptide into zebrafish lowers blood glucose with the same potency than human insulin. In vivo, when applied to water, this peptide reduces overall locomotor activity of zebrafish larvae, observed as a significant decrease in the percentage of time spent swimming and movement frequency. The sequence is that of Con-Ins F2c from Conus floridulus (Cone snail).